A 254-amino-acid polypeptide reads, in one-letter code: Phosphonates import ATP-binding protein PhnC 2 (254 aa).

Positions Leu-4–Gln-248 constitute an ABC transporter domain. An ATP-binding site is contributed by Gly-37 to Ser-44.

It belongs to the ABC transporter superfamily. Phosphonates importer (TC 3.A.1.9.1) family. In terms of assembly, the complex is composed of two ATP-binding proteins (PhnC), two transmembrane proteins (PhnE) and a solute-binding protein (PhnD).

The protein localises to the cell membrane. The enzyme catalyses phosphonate(out) + ATP + H2O = phosphonate(in) + ADP + phosphate + H(+). Its function is as follows. Part of the ABC transporter complex PhnCDE involved in phosphonates import. Responsible for energy coupling to the transport system. The protein is Phosphonates import ATP-binding protein PhnC 2 of Oceanobacillus iheyensis (strain DSM 14371 / CIP 107618 / JCM 11309 / KCTC 3954 / HTE831).